The primary structure comprises 205 residues: Adenylate kinase (205 aa).

11-16 (GSGKGT) lines the ATP pocket. The segment at 31-60 (STGDIFRHNVKSMTPLGVEAKRYIDNGDFV) is NMP. AMP is bound by residues Thr-32, Arg-37, 58-60 (DFV), 86-89 (GYPR), and Gln-93. The LID stretch occupies residues 127 to 137 (KRAEIEGRADD). Arg-128 contacts ATP. AMP is bound by residues Arg-134 and Arg-145. An ATP-binding site is contributed by Gly-173.

Belongs to the adenylate kinase family. In terms of assembly, monomer.

It localises to the cytoplasm. It carries out the reaction AMP + ATP = 2 ADP. It functions in the pathway purine metabolism; AMP biosynthesis via salvage pathway; AMP from ADP: step 1/1. Its function is as follows. Catalyzes the reversible transfer of the terminal phosphate group between ATP and AMP. Plays an important role in cellular energy homeostasis and in adenine nucleotide metabolism. The chain is Adenylate kinase from Micrococcus luteus (strain ATCC 4698 / DSM 20030 / JCM 1464 / CCM 169 / CCUG 5858 / IAM 1056 / NBRC 3333 / NCIMB 9278 / NCTC 2665 / VKM Ac-2230) (Micrococcus lysodeikticus).